A 971-amino-acid polypeptide reads, in one-letter code: Xylanolytic transcriptional activator xlnR (971 aa).

Disordered stretches follow at residues 1 to 25 (MSTT…PVGM) and 55 to 123 (GASA…PVRR). The segment covering 9 to 18 (FTSSFSPFSS) has biased composition (low complexity). The span at 67 to 96 (LRSSISKPQGQQLYSDESSAQHTQNATTGF) shows a compositional bias: polar residues. Residues 129–155 (CDQCNQLRTKCDGQNPCAHCIEFGLTC) constitute a DNA-binding region (zn(2)-C6 fungal-type). Polar residues-rich tracts occupy residues 182–199 (NGTA…SVSS), 227–241 (NLAT…QHSD), and 249–260 (QGSQQTPHSQPS). 3 disordered regions span residues 182 to 263 (NGTA…SLGG), 295 to 316 (LHPS…GMNS), and 580 to 610 (RELP…NLPP).

The protein belongs to the xlnR/xlr1 family.

It localises to the nucleus. In terms of biological role, transcriptional activator of the xylanolytic system. Involved in the regulation of extracellular cellulolytic and xylanolytic genes and in the regulation of the intracellular activities of D-xylose catabolic genes in the pentose catabolic pathway (PCP) in response to the presence of D-xylose. The chain is Xylanolytic transcriptional activator xlnR (xlnR) from Aspergillus flavus (strain ATCC 200026 / FGSC A1120 / IAM 13836 / NRRL 3357 / JCM 12722 / SRRC 167).